Here is a 357-residue protein sequence, read N- to C-terminus: Nitronate monooxygenase npaC (357 aa).

FMN contacts are provided by glutamine 167, glycine 172, and glycine 206.

It belongs to the nitronate monooxygenase family. NMO class I subfamily. FMN serves as cofactor.

Functionally, nitronate monooxygenase; part of the gene cluster that mediates the biosynthesis of the deadly neurotoxic nitroalkane 3-nitropropanoic acid (3-NPA) that acts as an antimetabolite of succinate and irreversibly inhibits succinate dehydrogenase and disrupts mitochondrial oxidative phosphorylation. Catalyzes the oxidation of 3-NPA to nitrite and malonic semialdehyde. NpaC is not conserved in all fungal npa clusters and, while it is possible that it serves as a self-protection mechanism against accumulation of 3-NPA (by npaA and npaB) in the producing host, the more likely scenario may be the three enzymes representing an alternative catabolic pathway of aspartate to generate readily metabolizable nitrogen and carbon sources. In Metarhizium robertsii (strain ARSEF 23 / ATCC MYA-3075) (Metarhizium anisopliae (strain ARSEF 23)), this protein is Nitronate monooxygenase npaC.